Consider the following 163-residue polypeptide: HTH-type transcriptional regulator IscR (163 aa).

The HTH rrf2-type domain maps to 2-131 (RLTSKGRYAV…NNITLGELVN (130 aa)). The H-T-H motif DNA-binding region spans 28–51 (LADISERQGISLSYLEQLFSRLRK). The [2Fe-2S] cluster site is built by Cys-92, Cys-98, and Cys-104.

The cofactor is [2Fe-2S] cluster.

In terms of biological role, regulates the transcription of several operons and genes involved in the biogenesis of Fe-S clusters and Fe-S-containing proteins. The sequence is that of HTH-type transcriptional regulator IscR from Enterobacter sp. (strain 638).